The chain runs to 816 residues: tRNA(Met) cytidine acetyltransferase TmcA (816 aa).

ATP-binding residues include glutamine 265 and arginine 439. Residues glutamate 469–serine 664 form the N-acetyltransferase domain. Residues isoleucine 589–threonine 591, glutamate 629, and arginine 636 each bind acetyl-CoA.

The protein belongs to the TmcA family.

The protein localises to the cytoplasm. The enzyme catalyses cytidine(34) in elongator tRNA(Met) + acetyl-CoA + ATP + H2O = N(4)-acetylcytidine(34) in elongator tRNA(Met) + ADP + phosphate + CoA + H(+). The catalysed reaction is a cytidine in RNA + acetyl-CoA + ATP + H2O = an N(4)-acetylcytidine in RNA + ADP + phosphate + CoA + H(+). It catalyses the reaction a cytidine in tRNA + acetyl-CoA + ATP + H2O = an N(4)-acetylcytidine in tRNA + ADP + phosphate + CoA + H(+). It carries out the reaction a cytidine in mRNA + acetyl-CoA + ATP + H2O = an N(4)-acetylcytidine in mRNA + ADP + phosphate + CoA + H(+). In terms of biological role, catalyzes the formation of N(4)-acetylcytidine (ac(4)C) at the wobble position of tRNA(Met), by using acetyl-CoA as an acetyl donor and ATP (or GTP). Its function is as follows. Catalyzes the formation of 233 N(4)-acetylcytidine (ac(4)C) sites in RNA, on the middle C of a CCG motif. Modifications are found in rRNA, ncRNA, mRNA and tRNA. More acetylation is observed at 85 than at 65 or 75 degrees Celsius. This is tRNA(Met) cytidine acetyltransferase TmcA from Pyrococcus furiosus (strain ATCC 43587 / DSM 3638 / JCM 8422 / Vc1).